Reading from the N-terminus, the 71-residue chain is Large ribosomal subunit protein bL31 (71 aa).

Zn(2+) is bound by residues Cys16, Cys18, Cys37, and Cys40.

This sequence belongs to the bacterial ribosomal protein bL31 family. Type A subfamily. As to quaternary structure, part of the 50S ribosomal subunit. Requires Zn(2+) as cofactor.

In terms of biological role, binds the 23S rRNA. This is Large ribosomal subunit protein bL31 from Pseudomonas putida (strain GB-1).